The sequence spans 392 residues: p21-activated protein kinase-interacting protein 1 (392 aa).

5 WD repeats span residues 40–77, 80–118, 121–160, 202–240, and 243–284; these read AHTA…DHGA, HHNG…CLKS, AHKG…SAFI, TNER…CLSE, and AHEN…KVSP. Positions 309-392 are disordered; the sequence is TKESPPAAAE…RKKKKIRMMQ (84 aa). A compositionally biased stretch (basic and acidic residues) spans 325-351; the sequence is EQSRRNKEESGHAVQEEEKQPKPDTEK. Residues 355–368 show a composition bias toward polar residues; sequence TGDSNKPTRGNSLV. The span at 381–392 shows a compositional bias: basic residues; it reads KKRKKKKIRMMQ.

Interacts with PAK1.

The protein resides in the nucleus. The protein localises to the nucleolus. In terms of biological role, negatively regulates the PAK1 kinase. PAK1 is a member of the PAK kinase family, which has been shown to play a positive role in the regulation of signaling pathways involving MAPK8 and RELA. PAK1 exists as an inactive homodimer, which is activated by binding of small GTPases such as CDC42 to an N-terminal regulatory domain. PAK1IP1 also binds to the N-terminus of PAK1, and inhibits the specific activation of PAK1 by CDC42. May be involved in ribosomal large subunit assembly. The protein is p21-activated protein kinase-interacting protein 1 (PAK1IP1) of Bos taurus (Bovine).